Reading from the N-terminus, the 378-residue chain is UPF0754 membrane protein BCQ_0944 (378 aa).

The next 2 helical transmembrane spans lie at 1–21 and 357–377; these read MNIWLSMLTTTGLGAIIGGFT and YLGALLGGMIGIVQGLLLLFL.

It belongs to the UPF0754 family.

Its subcellular location is the cell membrane. This chain is UPF0754 membrane protein BCQ_0944, found in Bacillus cereus (strain Q1).